Reading from the N-terminus, the 67-residue chain is Peptide Hp1036 (67 aa).

The N-terminal stretch at 1–23 (MKTQFAILLITLVLFQMFSQSDA) is a signal peptide. At phenylalanine 36 the chain carries Phenylalanine amide. Residues 40–67 (GLNDLSDLDELFDGEISEADVDFLREIM) constitute a propeptide that is removed on maturation.

It belongs to the non-disulfide-bridged peptide (NDBP) superfamily. Short antimicrobial peptide (group 4) family. Expressed by the venom gland.

The protein localises to the secreted. The protein resides in the target cell membrane. In terms of biological role, amphipathic peptide with antibacterial activities. Shows antiviral activities against the herpes simplex virus type-1. It potently inhibits the initial infection by provoking the rupture of viral envelop and the dissociation of proteins from the virions (EC(50) is 0.43 uM). It also effectively inhibits viral attachment (EC(50) is 2.87 uM), viral entry (EC(50) is 4.29 uM) and viral proliferation after infection (EC(50) is 7.86). Morever, it enters mammalian tested cells (Vero) and reduces the intracellular infectivity. This chain is Peptide Hp1036, found in Heterometrus petersii (Asian forest scorpion).